We begin with the raw amino-acid sequence, 242 residues long: Putative prolyl 4-hydroxylase (242 aa).

Residues N128–E238 enclose the Fe2OG dioxygenase domain.

The protein belongs to the P4HA family. It depends on Fe cation as a cofactor. L-ascorbate serves as cofactor.

It localises to the virion. The catalysed reaction is L-prolyl-[collagen] + 2-oxoglutarate + O2 = trans-4-hydroxy-L-prolyl-[collagen] + succinate + CO2. Functionally, may catalyze the post-translational formation of 4-hydroxyproline in -Xaa-Pro-Gly- sequences in the 6 collagen-like proteins of Mimivirus. This is Putative prolyl 4-hydroxylase from Acanthamoeba polyphaga mimivirus (APMV).